The sequence spans 1087 residues: MMPAMRASLILGCLLIIGPWAILAENPLPTIFPDKDELVQALHSSFTLKCTGESEVSWQNPNSNPEKQNVVIRSEENNSGLFVSILEVSDASAFDTGLYTCYHNHTQTEESEIEGTDIYIYVPDPNVPFAPPGLFDHIIVVEEDESALVPCRTTDPSSEVTLKNIESSRTVFAFYDSKQGFAGNFPPGSYICETTSNKMVYQTEPYILQTWKATHNISVEMEAPKTMFRAGETIAIDCIVLDNEVVDLKWTYPGKQRGVGIRNVEESKVPYQRLVYTLTLANATTEDSGEYECAVIHATLDNRVVKKTNITVHEKGFIDLEPMFGSEEFANLHEVKSFIVNLHAYPTPGLFWLKDNRTLSENLTEITTSIVTTKETRFQSKLKLIRAKEEDSGLYTLVAQNDRETKSYSFILQIKVPALILELVDKHHGASGEQTVGCLAKGMPVPDVEWLVCKDIKRCNNDTLWSILATNGSEISMETHQDDEQIESQVTFKKIEETMAIRCIAKNELGVVARELKLVAPTLRSELTVAAAVLVLLVIVIISLIVLVIIWKQKPRYEIRWRVIESISPDGHEYIYVDPMQLPYDSRWEFPRDGLVLGRILGSGAFGKVVEGAAYGLSRSQPVMKVAVKMLKPTARSSEKQALMSELKIMTHLGAHLNIVNLLGACTKSGPIYIITEYCFYGDLVNYLHKNRDNFQSRHPEKPKKDLDIFGLNPADESTRSYVILSFENNGDYMDMKQADTMQYVPMLEMKEPSKYSDIQRSLYDRPASYKKKPLSEVKNILSDDGFEGLTVLDLLSFTYQVARGMEFLASKNCVHRDLAARNVLLAHGKIVKICDFGLARDIMHDSNYVSKGSTFLPVKWMAPESIFDNLYTTLSDVWSFGILLWEIFSLGGTPYPGMIVDSTFYNKIKSGYRMAKPDHATHEVYDIMVKCWNSEPEKRPSFRHLSDIVESLLPMEYKRCYETVLHDFLKSDHPAVTRMRSDSDNSYIGVTYKNEHKMKDRESGFDEQRLSADSGYIIPLPDIDPVSEDESGKRNRHSSQTSEESAIETGSSSSTFIKRDDETIEDIDMMDDIGIDSSDLVEDSFL.

The N-terminal stretch at 1–24 (MMPAMRASLILGCLLIIGPWAILA) is a signal peptide. Topologically, residues 25–530 (ENPLPTIFPD…PTLRSELTVA (506 aa)) are extracellular. Ig-like C2-type domains are found at residues 27–114 (PLPT…SEIE) and 118–211 (IYIY…LQTW). An intrachain disulfide couples cysteine 50 to cysteine 101. N-linked (GlcNAc...) asparagine glycosylation is found at asparagine 77 and asparagine 104. Cysteine 151 and cysteine 192 are oxidised to a cystine. Residues asparagine 216, asparagine 282, asparagine 309, asparagine 356, asparagine 362, asparagine 461, and asparagine 471 are each glycosylated (N-linked (GlcNAc...) asparagine). 3 Ig-like C2-type domains span residues 217–309 (ISVE…KKTN), 315–409 (KGFI…KSYS), and 417–519 (PALI…LKLV). A disulfide bond links cysteine 238 and cysteine 293. Residues cysteine 438 and cysteine 503 are joined by a disulfide bond. Residues 531–551 (AAVLVLLVIVIISLIVLVIIW) form a helical membrane-spanning segment. Residues 552–1087 (KQKPRYEIRW…SSDLVEDSFL (536 aa)) are Cytoplasmic-facing. A phosphotyrosine; by autocatalysis mark is found at tyrosine 574 and tyrosine 576. One can recognise a Protein kinase domain in the interval 595–970 (LVLGRILGSG…CYETVLHDFL (376 aa)). Residues 601–609 (LGSGAFGKV) and lysine 629 contribute to the ATP site. 5 positions are modified to phosphotyrosine; by autocatalysis: tyrosine 722, tyrosine 733, tyrosine 744, tyrosine 756, and tyrosine 764. Aspartate 818 serves as the catalytic Proton acceptor. Phosphotyrosine; by autocatalysis occurs at positions 849, 988, and 1017. Positions 1017 to 1064 (YIIPLPDIDPVSEDESGKRNRHSSQTSEESAIETGSSSSTFIKRDDET) are disordered. The span at 1039–1057 (SSQTSEESAIETGSSSSTF) shows a compositional bias: polar residues.

The protein belongs to the protein kinase superfamily. Tyr protein kinase family. CSF-1/PDGF receptor subfamily. As to quaternary structure, interacts with homodimeric pdgfa, pdgfb and pdgfc, and with heterodimers formed by pdgfa and pdgfb. Monomer in the absence of bound ligand. Interaction with dimeric pdgfa, pdgfb and/or pdgfc leads to receptor dimerization, where both pdgfra homodimers and heterodimers with pdgfrb are observed. In terms of processing, ubiquitinated, leading to its internalization and degradation. Autophosphorylated on tyrosine residues upon ligand binding. Autophosphorylation occurs in trans, i.e. one subunit of the dimeric receptor phosphorylates tyrosine residues on the other subunit.

The protein localises to the cell membrane. Its subcellular location is the cell projection. It localises to the cilium. It is found in the golgi apparatus. The catalysed reaction is L-tyrosyl-[protein] + ATP = O-phospho-L-tyrosyl-[protein] + ADP + H(+). Present in an inactive conformation in the absence of bound ligand. Binding of pdgfa and/or pdgfb leads to dimerization and activation by autophosphorylation on tyrosine residues. In terms of biological role, tyrosine-protein kinase that acts as a cell-surface receptor for pdgfa, pdgfb and pdgfc and plays an essential role in the regulation of embryonic development, cell proliferation, survival and chemotaxis. Depending on the context, promotes or inhibits cell proliferation and cell migration. Plays an important role in the differentiation of bone marrow-derived mesenchymal stem cells. Required for normal skeleton development. Required for normal development of the gastrointestinal tract. Plays a role in cell migration and chemotaxis in wound healing. Plays a role in platelet activation, secretion of agonists from platelet granules, and in thrombin-induced platelet aggregation. Binding of its cognate ligands - homodimeric pdgfa, homodimeric pdgfb, heterodimers formed by pdgfa and pdgfb or homodimeric pdgfc -leads to the activation of several signaling cascades; the response depends on the nature of the bound ligand and is modulated by the formation of heterodimers between pdgfra and pdgfrb. Phosphorylates pik3r1, plcg1, and ptpn11. Activation of plcg1 leads to the production of the cellular signaling molecules diacylglycerol and inositol 1,4,5-trisphosphate, mobilization of cytosolic Ca(2+) and the activation of protein kinase C. Phosphorylates pik3r1, the regulatory subunit of phosphatidylinositol 3-kinase, and thereby mediates activation of the akt1 signaling pathway. Mediates activation of hras and of the MAP kinases mapk1/erk2 and/or mapk3/erk1. Promotes activation of stat family members stat1, stat3 and stat5a and/or stat5b. Receptor signaling is down-regulated by protein phosphatases that dephosphorylate the receptor and its down-stream effectors, and by rapid internalization of the activated receptor. The protein is Platelet-derived growth factor receptor alpha (pdgfra) of Xenopus laevis (African clawed frog).